The following is a 140-amino-acid chain: Midkine (140 aa).

Residues 1–20 (MQHRSFFLLALVALLAVTTA) form the signal peptide. 5 cysteine pairs are disulfide-bonded: Cys34/Cys58, Cys42/Cys67, Cys49/Cys71, Cys81/Cys113, and Cys91/Cys123.

Belongs to the pleiotrophin family. As to quaternary structure, homodimer. Interacts with ALK. Interacts with LRP1; promotes neuronal survival. Interacts with LRP2. Interacts with NCAM1. Interacts (via C-terminal) with PTPRZ1 (via chondroitin sulfate chains); this interaction is inhibited by PTN; this interaction promotes neuronal migration. Interacts with NCL; this interaction promotes NCL clustering and lateral movements of this complex into lipid rafts leading to MDK internalization. Interacts with LRP6 and LRP8: this interaction is calcium dependent. Interacts with ITGA4. Interacts with ITGA6. Interacts with ITGB1. Interacts with ITGA4:ITGB1 complex; this interaction mediates MDK-induced osteoblast cells migration through PXN phosphorylation. Interacts with ITGA6:ITGB1 complex; this interaction mediates MDK-induced neurite outgrowth. Interacts with NOTCH2; this interactio mediates a nuclear accumulation of NOTCH2 and therefore activation of NOTCH2 signaling leading to interaction between HES1 and STAT3. Interacts with GPC2 (via heparan sulfate chain); this interaction is inhibited by heparin followed by chondroitin sulfate E; this interaction induces GPC2 clustering through heparan sulfate chain; this interaction induces neuronal cell adhesion and neurite outgrowth. Interacts with SDC3; this interaction induces SDC3 clustering; this interaction induces neuronal cell adhesion and neurite outgrowth. Interacts with SDC1. Interacts with CSPG5; this interaction promotes elongation of oligodendroglial precursor-like cells. In terms of tissue distribution, expressed at a low level in arteries, and at higher levels in newly formed neointima. In brain, expressed in the caudate nucleus and the brain stem.

The protein localises to the secreted. Functionally, developmentally regulated, secreted growth factor homologous to pleiotrophin (PTN), which has heparin binding activity. Binds anaplastic lymphoma kinase (ALK) which induces ALK activation and subsequent phosphorylation of the insulin receptor substrate (IRS1), followed by the activation of mitogen-activated protein kinase (MAPK) and PI3-kinase, and the induction of cell proliferation. Involved in neointima formation after arterial injury, possibly by mediating leukocyte recruitment. Also involved in early fetal adrenal gland development. Its function is as follows. Secreted protein that functions as a cytokine and growth factor and mediates its signal through cell-surface proteoglycan and non-proteoglycan receptors. Binds cell-surface proteoglycan receptors via their chondroitin sulfate (CS) groups. Thereby regulates many processes like inflammatory response, cell proliferation, cell adhesion, cell growth, cell survival, tissue regeneration, cell differentiation and cell migration. Participates in inflammatory processes by exerting two different activities. Firstly, mediates neutrophils and macrophages recruitment to the sites of inflammation both by direct action by cooperating namely with ITGB2 via LRP1 and by inducing chemokine expression. This inflammation can be accompanied by epithelial cell survival and smooth muscle cell migration after renal and vessel damage, respectively. Secondly, suppresses the development of tolerogenic dendric cells thereby inhibiting the differentiation of regulatory T cells and also promote T cell expansion through NFAT signaling and Th1 cell differentiation. Promotes tissue regeneration after injury or trauma. After heart damage negatively regulates the recruitment of inflammatory cells and mediates cell survival through activation of anti-apoptotic signaling pathways via MAPKs and AKT pathways through the activation of angiogenesis. Also facilitates liver regeneration as well as bone repair by recruiting macrophage at trauma site and by promoting cartilage development by facilitating chondrocyte differentiation. Plays a role in brain by promoting neural precursor cells survival and growth through interaction with heparan sulfate proteoglycans. Binds PTPRZ1 and promotes neuronal migration and embryonic neurons survival. Binds SDC3 or GPC2 and mediates neurite outgrowth and cell adhesion. Binds chondroitin sulfate E and heparin leading to inhibition of neuronal cell adhesion induced by binding with GPC2. Binds CSPG5 and promotes elongation of oligodendroglial precursor-like cells. Also binds ITGA6:ITGB1 complex; this interaction mediates MDK-induced neurite outgrowth. Binds LRP1; promotes neuronal survival. Binds ITGA4:ITGB1 complex; this interaction mediates MDK-induced osteoblast cells migration through PXN phosphorylation. Binds anaplastic lymphoma kinase (ALK) which induces ALK activation and subsequent phosphorylation of the insulin receptor substrate (IRS1), followed by the activation of mitogen-activated protein kinase (MAPK) and PI3-kinase, and the induction of cell proliferation. Promotes epithelial to mesenchymal transition through interaction with NOTCH2. During arteriogenesis, plays a role in vascular endothelial cell proliferation by inducing VEGFA expression and release which in turn induces nitric oxide synthase expression. Moreover activates vasodilation through nitric oxide synthase activation. Negatively regulates bone formation in response to mechanical load by inhibiting Wnt/beta-catenin signaling in osteoblasts. In addition plays a role in hippocampal development, working memory, auditory response, early fetal adrenal gland development and the female reproductive system. This is Midkine from Rattus norvegicus (Rat).